Consider the following 422-residue polypeptide: Golgi-associated RAB2 interactor protein 2 (422 aa).

Residues 353–404 are disordered; that stretch reads PVESEANTSKEMKDKTSEEKMPDFQSTALKAEESRSLRTESNTSVLSPHIKS. Over residues 360–374 the composition is skewed to basic and acidic residues; the sequence is TSKEMKDKTSEEKMP.

This sequence belongs to the GARIN family. As to quaternary structure, interacts with CALM1. In terms of tissue distribution, expressed in spermatozoa (at protein level).

The protein localises to the cell projection. Its subcellular location is the cilium. It is found in the flagellum. Functionally, seems to play a role in sperm motility. The protein is Golgi-associated RAB2 interactor protein 2 of Homo sapiens (Human).